The chain runs to 558 residues: Putative polypeptide N-acetylgalactosaminyltransferase 13 (558 aa).

At 1–12 (MHAGGKYCGPRH) the chain is on the cytoplasmic side. The helical; Signal-anchor for type II membrane protein transmembrane segment at 13–32 (CSFYIIAFLICQLFFLVIFI) threads the bilayer. The Lumenal portion of the chain corresponds to 33-558 (RNDDASSANE…QFALEMEGQT (526 aa)). N-linked (GlcNAc...) asparagine glycans are attached at residues Asn48 and Asn111. 4 cysteine pairs are disulfide-bonded: Cys97/Cys335, Cys326/Cys412, Cys445/Cys460, and Cys484/Cys498. The catalytic subdomain A stretch occupies residues 109 to 225 (EANVSVVISF…EGWLEPLLER (117 aa)). Substrate contacts are provided by Asp150 and Arg186. Residue Asp209 coordinates Mn(2+). Substrate is bound at residue Ser210. His211 is a Mn(2+) binding site. A catalytic subdomain B region spans residues 281 to 343 (PYQSPAFAGG…PCSRIGHIFR (63 aa)). Residue Trp312 participates in substrate binding. Position 340 (His340) interacts with Mn(2+). Substrate is bound by residues Arg343 and His346. A Ricin B-type lectin domain is found at 422 to 556 (VSPELRMHFD…SFQFALEMEG (135 aa)). N-linked (GlcNAc...) asparagine glycosylation is present at Asn501. Cys525 and Cys539 are disulfide-bonded.

This sequence belongs to the glycosyltransferase 2 family. GalNAc-T subfamily. Mn(2+) is required as a cofactor. During embryonic stages 16-17, very weak expression in the midgut.

The protein resides in the golgi apparatus membrane. The enzyme catalyses L-seryl-[protein] + UDP-N-acetyl-alpha-D-galactosamine = a 3-O-[N-acetyl-alpha-D-galactosaminyl]-L-seryl-[protein] + UDP + H(+). It catalyses the reaction L-threonyl-[protein] + UDP-N-acetyl-alpha-D-galactosamine = a 3-O-[N-acetyl-alpha-D-galactosaminyl]-L-threonyl-[protein] + UDP + H(+). It functions in the pathway protein modification; protein glycosylation. Functionally, may catalyze the initial reaction in O-linked oligosaccharide biosynthesis, the transfer of an N-acetyl-D-galactosamine residue to a serine or threonine residue on the protein receptor. This Drosophila melanogaster (Fruit fly) protein is Putative polypeptide N-acetylgalactosaminyltransferase 13 (pgant13).